The sequence spans 135 residues: ATP synthase epsilon chain (135 aa).

It belongs to the ATPase epsilon chain family. As to quaternary structure, F-type ATPases have 2 components, CF(1) - the catalytic core - and CF(0) - the membrane proton channel. CF(1) has five subunits: alpha(3), beta(3), gamma(1), delta(1), epsilon(1). CF(0) has three main subunits: a, b and c.

Its subcellular location is the cell inner membrane. In terms of biological role, produces ATP from ADP in the presence of a proton gradient across the membrane. The sequence is that of ATP synthase epsilon chain from Rhizobium leguminosarum bv. trifolii (strain WSM2304).